A 488-amino-acid chain; its full sequence is Serine/threonine-protein kinase 32C (488 aa).

The tract at residues 1–56 is disordered; sequence MRSGAERRGSSAAAPPSSPPPGRARPAGSDVSPALPPPAASQPRARDAGDARAQPR. Residues Ser-10, Ser-17, and Ser-18 each carry the phosphoserine modification. Residues 24–33 show a composition bias toward low complexity; it reads ARPAGSDVSP. Residues 94 to 354 form the Protein kinase domain; it reads FQILRAIGKG…LQDMQTAPSL (261 aa). ATP-binding positions include 100–108 and Lys-123; that span reads IGKGSFGKV. The active-site Proton acceptor is the Asp-217. The segment covering 397-406 has biased composition (basic residues); the sequence is HKKKKRLAKN. Disordered stretches follow at residues 397 to 420 and 443 to 488; these read HKKKKRLAKNKSRDSSRDSSQSEN and KRSQ…SGSS.

It belongs to the protein kinase superfamily. Ser/Thr protein kinase family. It depends on Mg(2+) as a cofactor.

The enzyme catalyses L-seryl-[protein] + ATP = O-phospho-L-seryl-[protein] + ADP + H(+). It carries out the reaction L-threonyl-[protein] + ATP = O-phospho-L-threonyl-[protein] + ADP + H(+). The polypeptide is Serine/threonine-protein kinase 32C (Mus musculus (Mouse)).